Reading from the N-terminus, the 110-residue chain is U-scoloptoxin(16)-Er6a (110 aa).

The first 26 residues, 1 to 26 (MTSTRKLSVSCLIVFMVSSLIAVSSG), serve as a signal peptide directing secretion.

Belongs to the scoloptoxin-16 family. Post-translationally, contains 4 disulfide bonds. In terms of tissue distribution, expressed by the venom gland.

It is found in the secreted. The polypeptide is U-scoloptoxin(16)-Er6a (Ethmostigmus rubripes (Giant centipede)).